Consider the following 221-residue polypeptide: MANEEVILLDFWPSMFGMRLRIALAEKEIKYEYKQEDLRNKSPLLLQMNPIHKKIPVLIHNGKPICESIIAVEYIEEVWKDKAPSLLPSDPYDRAQARFWADYIDKKLYDFGRKLWATKGEEQEAAKKDFIECLKVLEGALGDRPYFGGESFGFVDIALIGFYSWFYAYETFGNFSTEAECPKFVAWAKRCMQRESVAKSLPDQPKVLEFVKVLRQKFGLE.

Positions 4 to 83 (EEVILLDFWP…YIEEVWKDKA (80 aa)) constitute a GST N-terminal domain. Residues Ser-14, Lys-41, Ile-55, and 67–68 (ES) each bind glutathione. Residues 90 to 214 (DPYDRAQARF…PKVLEFVKVL (125 aa)) form the GST C-terminal domain.

It belongs to the GST superfamily. Phi family. As to expression, abundant in seedlings and roots. It is also found in the shoot tips, flowers and leaves.

The enzyme catalyses RX + glutathione = an S-substituted glutathione + a halide anion + H(+). Its function is as follows. Conjugation of reduced glutathione to a wide number of exogenous and endogenous hydrophobic electrophiles. The sequence is that of Probable glutathione S-transferase parC (PARC) from Nicotiana tabacum (Common tobacco).